A 482-amino-acid polypeptide reads, in one-letter code: tRNA sulfurtransferase (482 aa).

The THUMP domain occupies 61–165 (LAIRDALTRI…DDRLLLIKGR (105 aa)). ATP is bound by residues 183–184 (LI), Lys-265, Gly-287, and Gln-296. Cys-344 and Cys-456 are joined by a disulfide. Positions 404-482 (FGPNDVILDI…GFNNVKVYRP (79 aa)) constitute a Rhodanese domain. The Cysteine persulfide intermediate role is filled by Cys-456.

It belongs to the ThiI family.

The protein localises to the cytoplasm. The enzyme catalyses [ThiI sulfur-carrier protein]-S-sulfanyl-L-cysteine + a uridine in tRNA + 2 reduced [2Fe-2S]-[ferredoxin] + ATP + H(+) = [ThiI sulfur-carrier protein]-L-cysteine + a 4-thiouridine in tRNA + 2 oxidized [2Fe-2S]-[ferredoxin] + AMP + diphosphate. It carries out the reaction [ThiS sulfur-carrier protein]-C-terminal Gly-Gly-AMP + S-sulfanyl-L-cysteinyl-[cysteine desulfurase] + AH2 = [ThiS sulfur-carrier protein]-C-terminal-Gly-aminoethanethioate + L-cysteinyl-[cysteine desulfurase] + A + AMP + 2 H(+). Its pathway is cofactor biosynthesis; thiamine diphosphate biosynthesis. In terms of biological role, catalyzes the ATP-dependent transfer of a sulfur to tRNA to produce 4-thiouridine in position 8 of tRNAs, which functions as a near-UV photosensor. Also catalyzes the transfer of sulfur to the sulfur carrier protein ThiS, forming ThiS-thiocarboxylate. This is a step in the synthesis of thiazole, in the thiamine biosynthesis pathway. The sulfur is donated as persulfide by IscS. This is tRNA sulfurtransferase from Escherichia coli O8 (strain IAI1).